The following is a 312-amino-acid chain: Small ribosomal subunit protein uS2m (312 aa).

This sequence belongs to the universal ribosomal protein uS2 family.

The protein localises to the mitochondrion. The chain is Small ribosomal subunit protein uS2m (RPS2) from Acanthamoeba castellanii (Amoeba).